A 345-amino-acid polypeptide reads, in one-letter code: Sorting nexin-15 (345 aa).

The PX domain occupies 1 to 130 (MSRQAKDDFL…EFFRGGEVTR (130 aa)). Arginine 105 bears the Omega-N-methylarginine mark. Residues 133–163 (EVSGDLHILPPPLIPTPPPDEPRVQPHETWL) form a disordered region. The segment covering 141–151 (LPPPLIPTPPP) has biased composition (pro residues). Serine 208 and serine 234 each carry phosphoserine. The segment at 226 to 274 (SKEEGAGPSPTHIGELAALEAGSGRPDQEPWEPGGQAEEDDEEGEPAPA) is disordered. In terms of domain architecture, MIT spans 272–345 (APAYLSQATE…AEEILHLHLS (74 aa)).

The protein belongs to the sorting nexin family.

In terms of biological role, may be involved in several stages of intracellular trafficking. Overexpression of SNX15 disrupts the normal trafficking of proteins from the plasma membrane to recycling endosomes or the TGN. This is Sorting nexin-15 (SNX15) from Bos taurus (Bovine).